Consider the following 119-residue polypeptide: MARVKRGVTSHAKHKKTLEAAKGFYGRRKNTIRAAKAAVDRSMQYATRDRRAKKRVFRALWIQRLNAAVRECGLTYSRFIDGLAKAGVAVDRKVLSDLAITQPEAFKAIVDKAKSALPA.

Belongs to the bacterial ribosomal protein bL20 family.

Functionally, binds directly to 23S ribosomal RNA and is necessary for the in vitro assembly process of the 50S ribosomal subunit. It is not involved in the protein synthesizing functions of that subunit. This Methylocella silvestris (strain DSM 15510 / CIP 108128 / LMG 27833 / NCIMB 13906 / BL2) protein is Large ribosomal subunit protein bL20.